A 231-amino-acid polypeptide reads, in one-letter code: Orotate phosphoribosyltransferase (231 aa).

5-phospho-alpha-D-ribose 1-diphosphate is bound by residues Lys-27, 79–80, Arg-106, Lys-107, Lys-110, His-112, and 133–141; these read YK and DDVMTAGTA. 2 residues coordinate orotate: Thr-137 and Arg-166.

The protein belongs to the purine/pyrimidine phosphoribosyltransferase family. PyrE subfamily. As to quaternary structure, homodimer. Mg(2+) serves as cofactor.

The catalysed reaction is orotidine 5'-phosphate + diphosphate = orotate + 5-phospho-alpha-D-ribose 1-diphosphate. It participates in pyrimidine metabolism; UMP biosynthesis via de novo pathway; UMP from orotate: step 1/2. In terms of biological role, catalyzes the transfer of a ribosyl phosphate group from 5-phosphoribose 1-diphosphate to orotate, leading to the formation of orotidine monophosphate (OMP). This Bifidobacterium longum (strain NCC 2705) protein is Orotate phosphoribosyltransferase.